The chain runs to 507 residues: Histidine ammonia-lyase (507 aa).

Residues 143-145 (SSG) constitute a cross-link (5-imidazolinone (Ser-Gly)). 2,3-didehydroalanine (Ser) is present on Ser-144.

This sequence belongs to the PAL/histidase family. In terms of processing, contains an active site 4-methylidene-imidazol-5-one (MIO), which is formed autocatalytically by cyclization and dehydration of residues Ser-Ser-Gly.

Its subcellular location is the cytoplasm. The catalysed reaction is L-histidine = trans-urocanate + NH4(+). It participates in amino-acid degradation; L-histidine degradation into L-glutamate; N-formimidoyl-L-glutamate from L-histidine: step 1/3. The protein is Histidine ammonia-lyase of Alkaliphilus metalliredigens (strain QYMF).